Reading from the N-terminus, the 210-residue chain is Fibroblast growth factor 21 (210 aa).

Positions 1–28 (MEWMRSRVGTLGLWVRLLLAVFLLGVYQ) are cleaved as a signal peptide. The interval 144-210 (PLRLPQKDSP…LQGRSPSYAS (67 aa)) is disordered.

It belongs to the heparin-binding growth factors family. Interacts (via C-terminus) with KLB; this interaction is direct. Interacts with FGFR4. As to expression, most abundantly expressed in the liver, also expressed in the thymus at lower levels. Expressed in skeletal muscle (at protein level). Secreted in plasma (at protein level).

The protein localises to the secreted. Functionally, stimulates glucose uptake in differentiated adipocytes via the induction of glucose transporter SLC2A1/GLUT1 expression (but not SLC2A4/GLUT4 expression). Activity probably requires the presence of KLB. Regulates systemic glucose homeostasis and insulin sensitivity. This is Fibroblast growth factor 21 (Fgf21) from Mus musculus (Mouse).